The following is a 144-amino-acid chain: Large ribosomal subunit protein uL13 (144 aa).

Belongs to the universal ribosomal protein uL13 family. As to quaternary structure, part of the 50S ribosomal subunit.

Functionally, this protein is one of the early assembly proteins of the 50S ribosomal subunit, although it is not seen to bind rRNA by itself. It is important during the early stages of 50S assembly. This Nitrosomonas europaea (strain ATCC 19718 / CIP 103999 / KCTC 2705 / NBRC 14298) protein is Large ribosomal subunit protein uL13.